The sequence spans 1609 residues: MRGSHRAAPALRPRGRLWPVLAVLAAAAAAGCAQAAMDECTDEGGRPQRCMPEFVNAAFNVTVVATNTCGTPPEEYCVQTGVTGVTKSCHLCDAGQPHLQHGAAFLTDYNNQADTTWWQSQTMLAGVQYPSSINLTLHLGKAFDITYVRLKFHTSRPESFAIYKRTREDGPWIPYQYYSGSCENTYSKANRGFIRTGGDEQQALCTDEFSDISPLTGGNVAFSTLEGRPSAYNFDNSPVLQEWVTATDIRVTLNRLNTFGDEVFNDPKVLKSYYYAISDFAVGGRCKCNGHASECMKNEFDKLVCNCKHNTYGVDCEKCLPFFNDRPWRRATAESASECLPCDCNGRSQECYFDPELYRSTGHGGHCTNCQDNTDGAHCERCRENFFRLGNNEACSSCHCSPVGSLSTQCDSYGRCSCKPGVMGDKCDRCQPGFHSLTEAGCRPCSCDPSGSIDECNIETGRCVCKDNVEGFNCERCKPGFFNLESSNPRGCTPCFCFGHSSVCTNAVGYSVYSISSTFQIDEDGWRAEQRDGSEASLEWSSERQDIAVISDSYFPRYFIAPAKFLGKQVLSYGQNLSFSFRVDRRDTRLSAEDLVLEGAGLRVSVPLIAQGNSYPSETTVKYVFRLHEATDYPWRPALTPFEFQKLLNNLTSIKIRGTYSERSAGYLDDVTLASARPGPGVPATWVESCTCPVGYGGQFCEMCLSGYRRETPNLGPYSPCVLCACNGHSETCDPETGVCNCRDNTAGPHCEKCSDGYYGDSTAGTSSDCQPCPCPGGSSCAVVPKTKEVVCTNCPTGTTGKRCELCDDGYFGDPLGRNGPVRLCRLCQCSDNIDPNAVGNCNRLTGECLKCIYNTAGFYCDRCKDGFFGNPLAPNPADKCKACNCNLYGTMKQQSSCNPVTGQCECLPHVTGQDCGACDPGFYNLQSGQGCERCDCHALGSTNGQCDIRTGQCECQPGITGQHCERCEVNHFGFGPEGCKPCDCHPEGSLSLQCKDDGRCECREGFVGNRCDQCEENYFYNRSWPGCQECPACYRLVKDKVADHRVKLQELESLIANLGTGDEMVTDQAFEDRLKEAEREVMDLLREAQDVKDVDQNLMDRLQRVNNTLSSQISRLQNIRNTIEETGNLAEQARAHVENTERLIEIASRELEKAKVAAANVSVTQPESTGDPNNMTLLAEEARKLAERHKQEADDIVRVAKTANDTSTEAYNLLLRTLAGENQTAFEIEELNRKYEQAKNISQDLEKQAARVHEEAKRAGDKAVEIYASVAQLSPLDSETLENEANNIKMEAENLEQLIDQKLKDYEDLREDMRGKELEVKNLLEKGKTEQQTADQLLARADAAKALAEEAAKKGRDTLQEANDILNNLKDFDRRVNDNKTAAEEALRKIPAINQTITEANEKTREAQQALGSAAADATEAKNKAHEAERIASAVQKNATSTKAEAERTFAEVTDLDNEVNNMLKQLQEAEKELKRKQDDADQDMMMAGMASQAAQEAEINARKAKNSVTSLLSIINDLLEQLGQLDTVDLNKLNEIEGTLNKAKDEMKVSDLDRKVSDLENEAKKQEAAIMDYNRDIEEIMKDIRNLEDIRKTLPSGCFNTPSIEKP.

The first 33 residues, 1 to 33 (MRGSHRAAPALRPRGRLWPVLAVLAAAAAAGCA), serve as a signal peptide directing secretion. In terms of domain architecture, Laminin N-terminal spans 46–285 (RPQRCMPEFV…AISDFAVGGR (240 aa)). Residues asparagine 60 and asparagine 134 are each glycosylated (N-linked (GlcNAc...) asparagine). Intrachain disulfides connect cysteine 286–cysteine 295, cysteine 288–cysteine 305, cysteine 307–cysteine 316, cysteine 319–cysteine 339, cysteine 342–cysteine 351, cysteine 344–cysteine 367, cysteine 370–cysteine 379, cysteine 382–cysteine 395, cysteine 398–cysteine 410, cysteine 400–cysteine 416, cysteine 418–cysteine 427, cysteine 430–cysteine 442, cysteine 445–cysteine 456, cysteine 447–cysteine 463, cysteine 465–cysteine 474, and cysteine 477–cysteine 492. 4 Laminin EGF-like domains span residues 286 to 341 (CKCN…ECLP), 342 to 397 (CDCN…ACSS), 398 to 444 (CHCS…GCRP), and 445 to 494 (CSCD…GCTP). Positions 495–504 (CFCFGHSSVC) constitute a Laminin EGF-like 5; first part domain. Residues 514-689 (SISSTFQIDE…PGVPATWVES (176 aa)) enclose the Laminin IV type A domain. N-linked (GlcNAc...) asparagine glycans are attached at residues asparagine 576 and asparagine 650. In terms of domain architecture, Laminin EGF-like 5; second part spans 690 to 723 (CTCPVGYGGQFCEMCLSGYRRETPNLGPYSPCVL). Disulfide bonds link cysteine 724/cysteine 733, cysteine 726/cysteine 740, cysteine 742/cysteine 751, cysteine 754/cysteine 770, cysteine 773/cysteine 781, cysteine 775/cysteine 792, cysteine 795/cysteine 804, cysteine 807/cysteine 825, cysteine 828/cysteine 842, cysteine 830/cysteine 849, cysteine 852/cysteine 861, cysteine 864/cysteine 881, cysteine 884/cysteine 898, cysteine 886/cysteine 905, cysteine 907/cysteine 916, cysteine 919/cysteine 932, cysteine 935/cysteine 947, cysteine 937/cysteine 954, cysteine 956/cysteine 965, cysteine 968/cysteine 980, cysteine 983/cysteine 995, cysteine 985/cysteine 1001, cysteine 1003/cysteine 1012, and cysteine 1015/cysteine 1028. 6 consecutive Laminin EGF-like domains span residues 724–772 (CACN…DCQP), 773–827 (CPCP…LCRL), 828–883 (CQCS…KCKA), 884–934 (CNCN…GCER), 935–982 (CDCH…GCKP), and 983–1030 (CDCH…GCQE). 2 N-linked (GlcNAc...) asparagine glycosylation sites follow: asparagine 1022 and asparagine 1107. Residues 1030-1609 (ECPACYRLVK…CFNTPSIEKP (580 aa)) are domain II and I. The stretch at 1038-1609 (VKDKVADHRV…CFNTPSIEKP (572 aa)) forms a coiled coil. A Phosphoserine; by FAM20C modification is found at serine 1149. 8 N-linked (GlcNAc...) asparagine glycosylation sites follow: asparagine 1161, asparagine 1175, asparagine 1205, asparagine 1223, asparagine 1241, asparagine 1380, asparagine 1395, and asparagine 1439. Phosphoserine is present on serine 1493.

Laminin is a complex glycoprotein, consisting of three different polypeptide chains (alpha, beta, gamma), which are bound to each other by disulfide bonds into a cross-shaped molecule comprising one long and three short arms with globules at each end. Gamma-1 is a subunit of laminin-1 (laminin-111 or EHS laminin), laminin-2 (laminin-211 or merosin), laminin-3 (laminin-121 or S-laminin), laminin-4 (laminin-221 or S-merosin), laminin-6 (laminin-311 or K-laminin), laminin-7 (laminin-321 or KS-laminin), laminin-8 (laminin-411), laminin-9 (laminin-421), laminin-10 (laminin-511) and laminin-11 (laminin-521). Interacts with SVEP1. In terms of tissue distribution, found in the basement membranes (major component).

It is found in the secreted. The protein resides in the extracellular space. Its subcellular location is the extracellular matrix. The protein localises to the basement membrane. Binding to cells via a high affinity receptor, laminin is thought to mediate the attachment, migration and organization of cells into tissues during embryonic development by interacting with other extracellular matrix components. The protein is Laminin subunit gamma-1 of Homo sapiens (Human).